Reading from the N-terminus, the 240-residue chain is Adiponectin (240 aa).

Residues 1–17 form the signal peptide; that stretch reads MLLQGALLLLLALPSHG. Residue Lys-28 is modified to 5-hydroxylysine. An O-linked (Gal...) hydroxylysine glycan is attached at Lys-28. The segment at 29–100 is disordered; the sequence is GACAGWMAGI…GTPGRKGEPG (72 aa). The residue at position 31 (Cys-31) is an S-(2-succinyl)cysteine. 4-hydroxyproline occurs at positions 39, 42, and 48. Residues 43–102 enclose the Collagen-like domain; that stretch reads GHNGTPGRDGRDGTPGEKGEKGDPGLVGPKGDTGETGITGIEGPRGFPGTPGRKGEPGES. A compositionally biased stretch (basic and acidic residues) spans 50–65; it reads RDGRDGTPGEKGEKGD. Residues Lys-60, Lys-63, and Lys-72 each carry the 5-hydroxylysine modification. Lys-60, Lys-63, and Lys-72 each carry an O-linked (Gal...) hydroxylysine glycan. 4-hydroxyproline is present on Pro-86. Lys-96 carries the post-translational modification 5-hydroxylysine. Lys-96 is a glycosylation site (O-linked (Gal...) hydroxylysine). Residues 103–240 enclose the C1q domain; that stretch reads AYVYRSAFSV…GFLLYHNIVE (138 aa).

As to quaternary structure, homomultimer. Forms trimers, hexamers and 12- to 18-mers. The trimers (low molecular weight complexes / LMW) are assembled via non-covalent interactions of the collagen-like domains in a triple helix and hydrophobic interactions within the globular C1q domain. Several trimers can associate to form disulfide-linked hexamers (middle molecular weight complexes / MMW) and larger complexes (higher molecular weight / HMW). The HMW-complex assembly is also modulated by the degree of lysine hydroxylation and glycosylation. LMW, MMW and HMW complexes bind to HBEGF, MMW and HMW complexes bind to PDGFB, and HMW complex binds to FGF2. Interacts with CTRP9 via the C1q domain (heterotrimeric complex). Post-translationally, HMW complexes are more extensively glycosylated than smaller oligomers. Hydroxylation and glycosylation of the lysine residues within the collagen-like domain of adiponectin seem to be critically involved in regulating the formation and/or secretion of HMW complexes and consequently contribute to the insulin-sensitizing activity of adiponectin in hepatocytes. O-glycosylated. O-linked glycans on hydroxylysine residues consist of Glc-Gal disaccharides bound to the oxygen atom of post-translationally added hydroxyl groups. O-linked glycosylations elsewhere disialylated with the structure Neu5Acalpha2-&gt;8Neu5Acalpha2-&gt;3Gal. Sialylated by alpha 2,8-sialyltransferase III. Desialylated forms are rapidly cleared from the circulation. Not N-glycosylated. In terms of processing, succination of Cys-31 by the Krebs cycle intermediate fumarate, which leads to S-(2-succinyl)cysteine residues, inhibits polymerization and secretion of adiponectin. Adiponectin is a major target for succination in both adipocytes and adipose tissue of diabetic mammals. It was proposed that succination of proteins is a biomarker of mitochondrial stress and accumulation of Krebs cycle intermediates in adipose tissue in diabetes and that succination of adiponectin may contribute to the decrease in plasma adiponectin in diabetes.

The protein localises to the secreted. Polymerization and secretion of adiponectin is inhibited by succination of cysteine residues by the Krebs cycle intermediate fumarate, which leads to S-(2-succinyl)cysteine residues. Its function is as follows. Important adipokine involved in the control of fat metabolism and insulin sensitivity, with direct anti-diabetic, anti-atherogenic and anti-inflammatory activities. Stimulates AMPK phosphorylation and activation in the liver and the skeletal muscle, enhancing glucose utilization and fatty-acid combustion. Antagonizes TNF-alpha by negatively regulating its expression in various tissues such as liver and macrophages, and also by counteracting its effects. Inhibits endothelial NF-kappa-B signaling through a cAMP-dependent pathway. May play a role in cell growth, angiogenesis and tissue remodeling by binding and sequestering various growth factors with distinct binding affinities, depending on the type of complex, LMW, MMW or HMW. In Bos taurus (Bovine), this protein is Adiponectin (ADIPOQ).